A 120-amino-acid chain; its full sequence is Prefoldin subunit beta (120 aa).

This sequence belongs to the prefoldin subunit beta family. In terms of assembly, heterohexamer of two alpha and four beta subunits.

It is found in the cytoplasm. Functionally, molecular chaperone capable of stabilizing a range of proteins. Seems to fulfill an ATP-independent, HSP70-like function in archaeal de novo protein folding. The protein is Prefoldin subunit beta of Methanospirillum hungatei JF-1 (strain ATCC 27890 / DSM 864 / NBRC 100397 / JF-1).